A 385-amino-acid polypeptide reads, in one-letter code: Signal transduction histidine-protein kinase/phosphatase DegS (385 aa).

Residues 31-141 (QIGEQSRQQY…IERSESLVSQ (111 aa)) adopt a coiled-coil conformation. S76 is modified (phosphoserine). Residues 183 to 385 (RVSREIHDGP…FIMIKVPLSL (203 aa)) enclose the Histidine kinase domain. H189 carries the phosphohistidine; by autocatalysis modification.

In terms of processing, autophosphorylated. Phosphorylated in vitro at Ser-76 by the serine/threonine-protein kinase YbdM, which stimulates the phosphate transfer to DegU.

It localises to the cytoplasm. The enzyme catalyses ATP + protein L-histidine = ADP + protein N-phospho-L-histidine.. Regulated via serine phosphorylation of its input domain. Phosphotransfer from DegS to DegU is stimulated by phosphorylation on Ser-76 and by DegQ. Functionally, member of the two-component regulatory system DegS/DegU, which plays an important role in the transition growth phase. Involved in the control of expression of different cellular functions, including production of degradative enzymes such as the neutral and alkaline proteases, flagellum formation and biofilm formation. Acts both as a protein kinase that undergoes autophosphorylation and subsequently transfers the phosphate to DegU, and as a protein phosphatase that dephosphorylates phospho-DegU. The polypeptide is Signal transduction histidine-protein kinase/phosphatase DegS (degS) (Bacillus subtilis (strain 168)).